A 170-amino-acid chain; its full sequence is Urease accessory protein UreE (170 aa).

Belongs to the UreE family.

It localises to the cytoplasm. Functionally, involved in urease metallocenter assembly. Binds nickel. Probably functions as a nickel donor during metallocenter assembly. In Helicobacter acinonychis (strain Sheeba), this protein is Urease accessory protein UreE.